Reading from the N-terminus, the 129-residue chain is Small ribosomal subunit protein uS11 (129 aa).

The protein belongs to the universal ribosomal protein uS11 family. Part of the 30S ribosomal subunit. Interacts with proteins S7 and S18. Binds to IF-3.

In terms of biological role, located on the platform of the 30S subunit, it bridges several disparate RNA helices of the 16S rRNA. Forms part of the Shine-Dalgarno cleft in the 70S ribosome. The polypeptide is Small ribosomal subunit protein uS11 (Bartonella bacilliformis (strain ATCC 35685 / KC583 / Herrer 020/F12,63)).